Reading from the N-terminus, the 297-residue chain is Ribosome production factor 2 homolog (297 aa).

Residues 28–232 form the Brix domain; sequence KKALFCRGAK…VMRKKLADDA (205 aa).

This sequence belongs to the RPF2 family.

The protein resides in the nucleus. It is found in the nucleolus. In Caenorhabditis elegans, this protein is Ribosome production factor 2 homolog.